The chain runs to 384 residues: DNA dC-&gt;dU-editing enzyme APOBEC-3G (384 aa).

Residues 1–60 form an essential for cytoplasmic localization region; the sequence is MKPHFRNTVERMYRDTFSYNFYNRPILSRRNTVWLCYEVKTKGPSRPPLDAKIFRGQVYS. One can recognise a CMP/dCMP-type deaminase 1 domain in the interval 29-138; that stretch reads RRNTVWLCYE…PDYQEALRSL (110 aa). Threonine 32 carries the phosphothreonine; by PKA modification. Residues lysine 42, lysine 52, and lysine 63 each participate in a (Microbial infection) Glycyl lysine isopeptide (Lys-Gly) (interchain with G-Cter in ubiquitin) cross-link. The Zn(2+) site is built by histidine 65, cysteine 97, and cysteine 100. (Microbial infection) Glycyl lysine isopeptide (Lys-Gly) (interchain with G-Cter in ubiquitin) cross-links involve residues lysine 150 and lysine 163. The interval 209-336 is necessary for homooligomerization; sequence EPWVRGRHET…TLAEAGAKIS (128 aa). Positions 213–215 are interaction with DNA; the sequence is RGR. Residues 214–328 form the CMP/dCMP-type deaminase 2 domain; that stretch reads GRHETYLCYE…GRCQEGLRTL (115 aa). At threonine 218 the chain carries Phosphothreonine; by PKA and CAMK2. Lysine 249 participates in a covalent cross-link: (Microbial infection) Glycyl lysine isopeptide (Lys-Gly) (interchain with G-Cter in ubiquitin). A Zn(2+)-binding site is contributed by histidine 257. Catalysis depends on glutamate 259, which acts as the Proton donor. Residue lysine 270 forms a (Microbial infection) Glycyl lysine isopeptide (Lys-Gly) (interchain with G-Cter in ubiquitin) linkage. Zn(2+) is bound by residues cysteine 288 and cysteine 291. (Microbial infection) Glycyl lysine isopeptide (Lys-Gly) (interchain with G-Cter in ubiquitin) cross-links involve residues lysine 297, lysine 301, and lysine 303. The segment at 313-320 is interaction with DNA; that stretch reads RIYDDQGR. Lysine 334 participates in a covalent cross-link: (Microbial infection) Glycyl lysine isopeptide (Lys-Gly) (interchain with G-Cter in ubiquitin).

The protein belongs to the cytidine and deoxycytidylate deaminase family. In terms of assembly, homodimer. Homooligomer. Can bind RNA to form ribonucleoprotein complexes of high-molecular-mass (HMM) or low-molecular-mass (LMM). HMM is inactive and heterogeneous in protein composition because of binding nonselectively to cellular RNAs, which in turn are associated with variety of cellular proteins. The LMM form which is enzymatically active has few or no RNAs associated. Its ability to form homooligomer is distinct from its ability to assemble into HMM. Interacts with APOBEC3B, APOBEC3F, MOV10, AGO2, EIF4E, EIF4ENIF1, DCP2 and DDX6 in an RNA-dependent manner. Interacts with AGO1, AGO3 and PKA/PRKACA. As to quaternary structure, (Microbial infection) Interacts with HIV-1 Vif; promoting its ubiquitination by a cullin-5-RING E3 ubiquitin-protein ligase complex (ECS complex) hijacked by the HIV-1 Vif. (Microbial infection) Interacts with HIV-1 reverse transcriptase/ribonuclease H. In terms of assembly, (Microbial infection) Interacts with hepatitis B virus capsid protein. Zn(2+) serves as cofactor. (Microbial infection) Following infection by HIV-1, ubiquitinated by a cullin-5-RING E3 ubiquitin-protein ligase complex (ECS complex) hijacked by the HIV-1 Vif protein, leading to its degradation. Deubiquitinated by USP49; leading to stabilization. In terms of processing, phosphorylation at Thr-32 reduces its binding to HIV-1 Vif and subsequent ubiquitination and degradation thus promoting its antiviral activity. Expressed in spleen, testes, ovary and peripheral blood leukocytes and CD4+ lymphocytes. Also expressed in non-permissive peripheral blood mononuclear cells, and several tumor cell lines; no expression detected in permissive lymphoid and non-lymphoid cell lines. Exists only in the LMM form in peripheral blood-derived resting CD4 T-cells and monocytes, both of which are refractory to HIV-1 infection. LMM is converted to a HMM complex when resting CD4 T-cells are activated or when monocytes are induced to differentiate into macrophages. This change correlates with increased susceptibility of these cells to HIV-1 infection.

It localises to the cytoplasm. The protein resides in the nucleus. Its subcellular location is the P-body. It carries out the reaction a 2'-deoxycytidine in single-stranded DNA + H2O + H(+) = a 2'-deoxyuridine in single-stranded DNA + NH4(+). Its activity is regulated as follows. (Microbial infection) Antiviral activity is neutralized by the HIV-1 virion infectivity factor (Vif), that prevents its incorporation into progeny virions by both inhibiting its translation and/or by inducing its ubiquitination and subsequent degradation by the 26S proteasome. Can also be neutralized by simian immunodeficiency virus sooty mangabey monkey virus (SIV-sm) and chimpanzee immunodeficiency virus (SIV-cpz) Vif. In terms of biological role, DNA deaminase (cytidine deaminase) which acts as an inhibitor of retrovirus replication and retrotransposon mobility via deaminase-dependent and -independent mechanisms. Exhibits potent antiviral activity against Vif-deficient HIV-1. After the penetration of retroviral nucleocapsids into target cells of infection and the initiation of reverse transcription, it can induce the conversion of cytosine to uracil in the minus-sense single-strand viral DNA, leading to G-to-A hypermutations in the subsequent plus-strand viral DNA. The resultant detrimental levels of mutations in the proviral genome, along with a deamination-independent mechanism that works prior to the proviral integration, together exert efficient antiretroviral effects in infected target cells. Selectively targets single-stranded DNA and does not deaminate double-stranded DNA or single- or double-stranded RNA. Exhibits antiviral activity also against simian immunodeficiency viruses (SIVs), hepatitis B virus (HBV), equine infectious anemia virus (EIAV), xenotropic MuLV-related virus (XMRV) and simian foamy virus (SFV). May inhibit the mobility of LTR and non-LTR retrotransposons. The polypeptide is DNA dC-&gt;dU-editing enzyme APOBEC-3G (Homo sapiens (Human)).